We begin with the raw amino-acid sequence, 1368 residues long: DNA-directed RNA polymerase subunit beta (1368 aa).

Belongs to the RNA polymerase beta chain family. The RNAP catalytic core consists of 2 alpha, 1 beta, 1 beta' and 1 omega subunit. When a sigma factor is associated with the core the holoenzyme is formed, which can initiate transcription.

It carries out the reaction RNA(n) + a ribonucleoside 5'-triphosphate = RNA(n+1) + diphosphate. Functionally, DNA-dependent RNA polymerase catalyzes the transcription of DNA into RNA using the four ribonucleoside triphosphates as substrates. The protein is DNA-directed RNA polymerase subunit beta of Legionella pneumophila (strain Lens).